Reading from the N-terminus, the 360-residue chain is Peptide chain release factor 1 (360 aa).

The residue at position 235 (Gln-235) is an N5-methylglutamine. Basic and acidic residues predominate over residues 291 to 308 (ASERRNLLGTGDRSDRNR). The interval 291–312 (ASERRNLLGTGDRSDRNRTYNF) is disordered.

It belongs to the prokaryotic/mitochondrial release factor family. Post-translationally, methylated by PrmC. Methylation increases the termination efficiency of RF1.

The protein resides in the cytoplasm. Its function is as follows. Peptide chain release factor 1 directs the termination of translation in response to the peptide chain termination codons UAG and UAA. This Yersinia pseudotuberculosis serotype O:1b (strain IP 31758) protein is Peptide chain release factor 1.